Consider the following 338-residue polypeptide: Adenylosuccinate synthetase (338 aa).

GTP is bound by residues 12–18 (GDEGKGK) and 42–44 (GHT). Asp13 serves as the catalytic Proton acceptor. Residues Asp13 and Gly42 each coordinate Mg(2+). Residues 13-16 (DEGK), 40-43 (NAGH), Thr127, Arg141, Gln179, Thr194, and Arg256 contribute to the IMP site. Residue His43 is the Proton donor of the active site. 252 to 258 (TVTGRRR) is a binding site for substrate. GTP-binding positions include Arg258, 284 to 286 (CLD), and 324 to 326 (STG).

It belongs to the adenylosuccinate synthetase family. Homodimer. Requires Mg(2+) as cofactor.

Its subcellular location is the cytoplasm. The catalysed reaction is IMP + L-aspartate + GTP = N(6)-(1,2-dicarboxyethyl)-AMP + GDP + phosphate + 2 H(+). It functions in the pathway purine metabolism; AMP biosynthesis via de novo pathway; AMP from IMP: step 1/2. In terms of biological role, plays an important role in the de novo pathway of purine nucleotide biosynthesis. Catalyzes the first committed step in the biosynthesis of AMP from IMP. This chain is Adenylosuccinate synthetase, found in Methanococcus maripaludis (strain C7 / ATCC BAA-1331).